The primary structure comprises 105 residues: Transmembrane protein 273 (105 aa).

An N-terminal signal peptide occupies residues 1-19 (MNLGVSMLRILFLLDVGGA). At 20 to 38 (QVLATGKTPGAEIDFKYAL) the chain is on the extracellular side. Residues 39–59 (IGTAVGVAISAGFLALKICMI) traverse the membrane as a helical segment. Residues 60–105 (RRHLFDDDSSDLKSTPGGLSDTIPLKKRAPRRNHNFSKRDAQVIEL) lie on the Cytoplasmic side of the membrane.

The protein localises to the membrane. The sequence is that of Transmembrane protein 273 from Homo sapiens (Human).